Consider the following 213-residue polypeptide: MSADIRFDSLKTIVPAVSRETADRLIAFEDLFRKWSKAINLASPSTLADLWNRHILDSAQLFPLAKEATRWLDIGSGGGFPGIVTACFLAERSGGCIDLVESAGKKAAFLRTAAGHLYVPARVHSARIESMWEKIETPQVVTARALASLGDLFTLAEPWLSDGAKALFQKGRDYQREIDESRVGWSFDLVKHPSAIDQASVILEISNLRRKTD.

S-adenosyl-L-methionine contacts are provided by residues G75, F80, 128 to 129, and R144; that span reads IE.

It belongs to the methyltransferase superfamily. RNA methyltransferase RsmG family.

Its subcellular location is the cytoplasm. The catalysed reaction is guanosine(527) in 16S rRNA + S-adenosyl-L-methionine = N(7)-methylguanosine(527) in 16S rRNA + S-adenosyl-L-homocysteine. Specifically methylates the N7 position of guanine in position 527 of 16S rRNA. The protein is Ribosomal RNA small subunit methyltransferase G of Brucella suis biovar 1 (strain 1330).